A 76-amino-acid polypeptide reads, in one-letter code: Tautomerase PptA (76 aa).

The Proton acceptor; via imino nitrogen role is filled by Pro2.

The protein belongs to the 4-oxalocrotonate tautomerase family. PptA subfamily. In terms of assembly, homodimer.

The protein resides in the cytoplasm. The sequence is that of Tautomerase PptA from Pectobacterium carotovorum subsp. carotovorum (strain PC1).